We begin with the raw amino-acid sequence, 205 residues long: Heme ligase (205 aa).

An FAS1 domain is found at 48 to 203 (KRTIINLIYS…GVVHIVDKPI (156 aa)). A required for binding to host hemoglobin region spans residues 154-172 (LRNLLNNDLIVKIEGEFKH). 2 heme binding domain regions span residues 171–181 (KHCNHSIYLNG) and 191–200 (CHNGVVHIVD).

In terms of assembly, component of the hemozoin formation complex (HFC) composed of falcipains FP2A and/or FP2B, plasmepsins PMII, PMIII/HAP and PMIV, heme detoxifying protein HDP and falcilysin FLN. The HFC complex is involved in hemoglobin degradation and detoxification of heme in the food vacuole during the asexual blood stage. Interacts with falcipain 2; the interaction is direct and enhances HDP catalytic activity. Interacts with host hemoglobin.

It localises to the vacuole. The protein resides in the host cytoplasm. It is found in the host cytosol. It carries out the reaction 2 Fe(III)-heme b = beta-hematin. Heme detoxifying enzyme that converts heme to crystalline hemozoin (beta-hematin) to protect the organism from the toxic effects of heme. During its development, P.falciparum proteolyzes vast amounts of host hemoglobin, leading to heme release. The sequence is that of Heme ligase from Plasmodium falciparum (isolate 3D7).